The following is a 274-amino-acid chain: Large ribosomal subunit protein uL2 (274 aa).

Positions 223-265 are disordered; sequence VVMNPVDHPHGGGEGRTSGGRHPVSPWGVPTKGYKTRSNKRTD.

The protein belongs to the universal ribosomal protein uL2 family. As to quaternary structure, part of the 50S ribosomal subunit. Forms a bridge to the 30S subunit in the 70S ribosome.

In terms of biological role, one of the primary rRNA binding proteins. Required for association of the 30S and 50S subunits to form the 70S ribosome, for tRNA binding and peptide bond formation. It has been suggested to have peptidyltransferase activity; this is somewhat controversial. Makes several contacts with the 16S rRNA in the 70S ribosome. The sequence is that of Large ribosomal subunit protein uL2 from Vibrio vulnificus (strain CMCP6).